We begin with the raw amino-acid sequence, 245 residues long: Ribonuclease 3 (245 aa).

Residues 19–148 (FKVFQEKIGI…FIGALYLDQG (130 aa)) enclose the RNase III domain. Residue Glu-61 coordinates Mg(2+). Asp-65 is an active-site residue. Residues Asp-134 and Glu-137 each coordinate Mg(2+). The active site involves Glu-137. The 70-residue stretch at 174-243 (DYKSQLQELI…AAEALKKLKE (70 aa)) folds into the DRBM domain.

This sequence belongs to the ribonuclease III family. Homodimer. The cofactor is Mg(2+).

Its subcellular location is the cytoplasm. The catalysed reaction is Endonucleolytic cleavage to 5'-phosphomonoester.. Digests double-stranded RNA. Involved in the processing of primary rRNA transcript to yield the immediate precursors to the large and small rRNAs (23S and 16S). Processes some mRNAs, and tRNAs when they are encoded in the rRNA operon. Processes pre-crRNA and tracrRNA of type II CRISPR loci if present in the organism. This is Ribonuclease 3 from Bacillus cereus (strain AH187).